The primary structure comprises 397 residues: Nicotinate phosphoribosyltransferase (397 aa).

Phosphohistidine; by autocatalysis is present on His-221.

This sequence belongs to the NAPRTase family. Transiently phosphorylated on a His residue during the reaction cycle. Phosphorylation strongly increases the affinity for substrates and increases the rate of nicotinate D-ribonucleotide production. Dephosphorylation regenerates the low-affinity form of the enzyme, leading to product release.

It carries out the reaction nicotinate + 5-phospho-alpha-D-ribose 1-diphosphate + ATP + H2O = nicotinate beta-D-ribonucleotide + ADP + phosphate + diphosphate. Its pathway is cofactor biosynthesis; NAD(+) biosynthesis; nicotinate D-ribonucleotide from nicotinate: step 1/1. In terms of biological role, catalyzes the synthesis of beta-nicotinate D-ribonucleotide from nicotinate and 5-phospho-D-ribose 1-phosphate at the expense of ATP. The polypeptide is Nicotinate phosphoribosyltransferase (Herminiimonas arsenicoxydans).